Reading from the N-terminus, the 237-residue chain is Putative N-acetylmannosamine-6-phosphate 2-epimerase (237 aa).

Belongs to the NanE family.

The catalysed reaction is an N-acyl-D-glucosamine 6-phosphate = an N-acyl-D-mannosamine 6-phosphate. Its pathway is amino-sugar metabolism; N-acetylneuraminate degradation; D-fructose 6-phosphate from N-acetylneuraminate: step 3/5. Functionally, converts N-acetylmannosamine-6-phosphate (ManNAc-6-P) to N-acetylglucosamine-6-phosphate (GlcNAc-6-P). The protein is Putative N-acetylmannosamine-6-phosphate 2-epimerase of Caldanaerobacter subterraneus subsp. tengcongensis (strain DSM 15242 / JCM 11007 / NBRC 100824 / MB4) (Thermoanaerobacter tengcongensis).